We begin with the raw amino-acid sequence, 155 residues long: Regulatory protein RecX (155 aa).

This sequence belongs to the RecX family.

Its subcellular location is the cytoplasm. In terms of biological role, modulates RecA activity. In Pseudomonas savastanoi pv. phaseolicola (strain 1448A / Race 6) (Pseudomonas syringae pv. phaseolicola (strain 1448A / Race 6)), this protein is Regulatory protein RecX.